The primary structure comprises 247 residues: ATP synthase subunit a, chloroplastic (247 aa).

A run of 5 helical transmembrane segments spans residues 38 to 58 (QVLI…FIAV), 95 to 115 (VPFI…GALL), 134 to 154 (INTT…AGLS), 199 to 219 (LVVV…VMFL), and 220 to 240 (GLFT…AYIG).

Belongs to the ATPase A chain family. F-type ATPases have 2 components, CF(1) - the catalytic core - and CF(0) - the membrane proton channel. CF(1) has five subunits: alpha(3), beta(3), gamma(1), delta(1), epsilon(1). CF(0) has four main subunits: a, b, b' and c.

The protein resides in the plastid. It localises to the chloroplast thylakoid membrane. Functionally, key component of the proton channel; it plays a direct role in the translocation of protons across the membrane. The polypeptide is ATP synthase subunit a, chloroplastic (Citrus sinensis (Sweet orange)).